The sequence spans 259 residues: Thiazole synthase (259 aa).

The active-site Schiff-base intermediate with DXP is K99. Residues G160, A187–G188, and N209–T210 each bind 1-deoxy-D-xylulose 5-phosphate.

Belongs to the ThiG family. Homotetramer. Forms heterodimers with either ThiH or ThiS.

The protein localises to the cytoplasm. The enzyme catalyses [ThiS sulfur-carrier protein]-C-terminal-Gly-aminoethanethioate + 2-iminoacetate + 1-deoxy-D-xylulose 5-phosphate = [ThiS sulfur-carrier protein]-C-terminal Gly-Gly + 2-[(2R,5Z)-2-carboxy-4-methylthiazol-5(2H)-ylidene]ethyl phosphate + 2 H2O + H(+). It participates in cofactor biosynthesis; thiamine diphosphate biosynthesis. Its function is as follows. Catalyzes the rearrangement of 1-deoxy-D-xylulose 5-phosphate (DXP) to produce the thiazole phosphate moiety of thiamine. Sulfur is provided by the thiocarboxylate moiety of the carrier protein ThiS. In vitro, sulfur can be provided by H(2)S. This chain is Thiazole synthase, found in Solibacter usitatus (strain Ellin6076).